Here is a 550-residue protein sequence, read N- to C-terminus: Metal transporter Nramp4 (550 aa).

Basic and acidic residues predominate over residues 1 to 13 (MEEGAKIGREHEQ). The tract at residues 1-37 (MEEGAKIGREHEQQQQQHGRVNGSGRVAAVGGGSGGG) is disordered. Residues 14–29 (QQQQHGRVNGSGRVAA) show a composition bias toward low complexity. A run of 12 helical transmembrane segments spans residues 72-92 (FLAH…PSNL), 105-125 (SLLW…SLAA), 151-171 (LWLL…LGTA), 177-197 (LLHI…FLIL), 207-227 (MEFT…MELG), 255-275 (VAMF…SLVL), 292-312 (FFLL…VAIV), 354-374 (VYGV…SYAG), 388-408 (IIYL…CSIG), 416-436 (IINI…IPLI), 457-477 (IAWI…CTSF), and 492-512 (AIIS…LIYL).

Belongs to the NRAMP (TC 2.A.55) family.

The protein resides in the membrane. Functionally, probable metal transporter. This is Metal transporter Nramp4 (NRAMP4) from Oryza sativa subsp. japonica (Rice).